The primary structure comprises 255 residues: uncharacterized protein (255 aa).

The segment at 42–67 (ACSGSPPEPGKGRPDTTPEQEVPVTA) is disordered.

This is an uncharacterized protein from Mycobacterium tuberculosis (strain CDC 1551 / Oshkosh).